A 306-amino-acid chain; its full sequence is Homoserine kinase (306 aa).

88 to 98 lines the ATP pocket; the sequence is PLARGLGSSAT.

Belongs to the GHMP kinase family. Homoserine kinase subfamily.

The protein resides in the cytoplasm. The enzyme catalyses L-homoserine + ATP = O-phospho-L-homoserine + ADP + H(+). The protein operates within amino-acid biosynthesis; L-threonine biosynthesis; L-threonine from L-aspartate: step 4/5. In terms of biological role, catalyzes the ATP-dependent phosphorylation of L-homoserine to L-homoserine phosphate. The chain is Homoserine kinase from Synechococcus sp. (strain ATCC 27144 / PCC 6301 / SAUG 1402/1) (Anacystis nidulans).